Consider the following 459-residue polypeptide: Probable 1,4-beta-D-glucan cellobiohydrolase C (459 aa).

Positions 1–18 (MHYPLSLALAFLPFGIQA) are cleaved as a signal peptide. One can recognise a CBM1 domain in the interval 19-54 (QQTLWGQCGGQGYSGATSCVAGATCATVNEYYAQCT). 2 cysteine pairs are disulfide-bonded: Cys-26–Cys-43 and Cys-37–Cys-53. The segment at 54–94 (TPAAGTSSATTLKTTTSSTTAAVTTTTTTQSPTGSASPTTT) is thr-rich linker. A disordered region spans residues 76 to 97 (VTTTTTTQSPTGSASPTTTASA). A catalytic region spans residues 95–459 (ASASGNPFSG…QLLTNANPAF (365 aa)). The active site involves Asp-189. Residues Cys-190 and Cys-249 are joined by a disulfide bond. Asp-235 functions as the Proton donor in the catalytic mechanism. Asn-303 carries N-linked (GlcNAc...) asparagine glycosylation. Cysteines 381 and 428 form a disulfide. The active-site Nucleophile is Asp-414.

Belongs to the glycosyl hydrolase 6 (cellulase B) family.

The protein localises to the secreted. The enzyme catalyses Hydrolysis of (1-&gt;4)-beta-D-glucosidic linkages in cellulose and cellotetraose, releasing cellobiose from the non-reducing ends of the chains.. In terms of biological role, the biological conversion of cellulose to glucose generally requires three types of hydrolytic enzymes: (1) Endoglucanases which cut internal beta-1,4-glucosidic bonds; (2) Exocellobiohydrolases that cut the disaccharide cellobiose from the non-reducing end of the cellulose polymer chain; (3) Beta-1,4-glucosidases which hydrolyze the cellobiose and other short cello-oligosaccharides to glucose. The sequence is that of Probable 1,4-beta-D-glucan cellobiohydrolase C (cbhC) from Aspergillus niger (strain ATCC MYA-4892 / CBS 513.88 / FGSC A1513).